The sequence spans 377 residues: Putative F-box only protein 10 (377 aa).

Residues 1–46 (MVSVNLPWELVEEILYRVPPQSLARFRTVCKQWNSLFDDNKFVNDH) form the F-box domain.

This is Putative F-box only protein 10 (FBX10) from Arabidopsis thaliana (Mouse-ear cress).